We begin with the raw amino-acid sequence, 269 residues long: Ribosomal RNA small subunit methyltransferase J (269 aa).

Residues 125-126 and D179 each bind S-adenosyl-L-methionine; that span reads ER.

The protein belongs to the methyltransferase superfamily. RsmJ family.

It is found in the cytoplasm. It catalyses the reaction guanosine(1516) in 16S rRNA + S-adenosyl-L-methionine = N(2)-methylguanosine(1516) in 16S rRNA + S-adenosyl-L-homocysteine + H(+). Functionally, specifically methylates the guanosine in position 1516 of 16S rRNA. This Pseudomonas syringae pv. tomato (strain ATCC BAA-871 / DC3000) protein is Ribosomal RNA small subunit methyltransferase J.